The chain runs to 424 residues: Tyrosine--tRNA ligase (424 aa).

Y33 is a binding site for L-tyrosine. The short motif at 38–47 (PSADSLHIGH) is the 'HIGH' region element. Residues Y170 and Q174 each contribute to the L-tyrosine site. Residues 230–234 (KFGKT) carry the 'KMSKS' region motif. K233 provides a ligand contact to ATP. The region spanning 357–424 (MSLIDALVRC…RRHYHLIRLV (68 aa)) is the S4 RNA-binding domain.

Belongs to the class-I aminoacyl-tRNA synthetase family. TyrS type 1 subfamily. Homodimer.

The protein localises to the cytoplasm. It carries out the reaction tRNA(Tyr) + L-tyrosine + ATP = L-tyrosyl-tRNA(Tyr) + AMP + diphosphate + H(+). Its function is as follows. Catalyzes the attachment of tyrosine to tRNA(Tyr) in a two-step reaction: tyrosine is first activated by ATP to form Tyr-AMP and then transferred to the acceptor end of tRNA(Tyr). The protein is Tyrosine--tRNA ligase of Roseiflexus castenholzii (strain DSM 13941 / HLO8).